Consider the following 92-residue polypeptide: Small ribosomal subunit protein uS19 (92 aa).

This sequence belongs to the universal ribosomal protein uS19 family.

In terms of biological role, protein S19 forms a complex with S13 that binds strongly to the 16S ribosomal RNA. The chain is Small ribosomal subunit protein uS19 from Gloeothece citriformis (strain PCC 7424) (Cyanothece sp. (strain PCC 7424)).